The primary structure comprises 134 residues: Fluoride-specific ion channel FluC (134 aa).

The next 4 membrane-spanning stretches (helical) occupy residues 7-27 (LAVA…TIMA), 38-58 (GTLL…IVLV), 69-89 (LFLF…AAES), and 110-130 (VGSL…LLGH). Residues G77 and T80 each contribute to the Na(+) site.

Belongs to the fluoride channel Fluc/FEX (TC 1.A.43) family.

It is found in the cell inner membrane. The enzyme catalyses fluoride(in) = fluoride(out). Na(+) is not transported, but it plays an essential structural role and its presence is essential for fluoride channel function. Its function is as follows. Fluoride-specific ion channel. Important for reducing fluoride concentration in the cell, thus reducing its toxicity. The polypeptide is Fluoride-specific ion channel FluC (Legionella pneumophila (strain Lens)).